A 517-amino-acid chain; its full sequence is Cytochrome P450 monooxygenase cdmJ (517 aa).

Residues 15-35 (YMWSLTLFALCLSAILMFPFL) traverse the membrane as a helical segment. Asparagine 404 carries N-linked (GlcNAc...) asparagine glycosylation. Residue cysteine 451 participates in heme binding.

The protein belongs to the cytochrome P450 family. Heme is required as a cofactor.

It localises to the membrane. The enzyme catalyses 3-hydroxypentacecilide A + NADPH + O2 + H(+) = chrodrimanin F + NADP(+) + H2O. It catalyses the reaction chrodrimanin C + NADPH + O2 + H(+) = chrodrimanin H + NADP(+) + H2O. The catalysed reaction is verruculide A + NADPH + O2 + H(+) = chrodrimanin E + NADP(+) + H2O. It carries out the reaction chrodrimanin T + NADPH + O2 + H(+) = chrodrimanin A + NADP(+) + H2O. The protein operates within secondary metabolite biosynthesis; terpenoid biosynthesis. Cytochrome P450 monooxygenase; part of the gene cluster that mediates the biosynthesis of chrodrimanin B, a meroterpenoid that acts as a potent blocker of insect GABA-gated chloride channels. The first step of the pathway is the biosynthesis of 6-hydroxymellein by the polyketide synthase cdmE. The prenyltransferase cdmH acts as a 6-hydroxymellein 5-farnesyltransferase and produces the hydrophobic metabolite verruculide C. The FAD-dependent monooxygenase cdmI further converts verruculide C into verruculide B. The terpene cyclase cdmG then produced the pentacyclic molecule 3-hydroxypentacecilide A, the backbone structure of chrodrimanin B, via folding the farnesyl moiety of the substrate into the chair-boat conformation. The short-chain dehydrogenase/reductase cdmF functions as the 3-OH dehydrogenase that oxidizes the C-3 hydroxyl group of 3-hydroxypentacecilide A and produces chrodrimanin C, the dehydrogenated product of 3-hydroxypentacecilide A. The cytochrome P450 monooxygenase cdmJ then accepts both 3-hydroxypentacecilide A and chrodrimanin C and functions as a C-7-beta-hydroxylase to produce respectively chrodrimanin H and chrodrimanin F. The dioxygenase cdmA accepts chrodrimanin H to afford chrodrimanin E, which is further transformed to chrodrimanin A by the dioxygenase cdmD. CdmA can also accept chrodrimanin C as substrate to convert it into verruculide A, which is further converted into chrodrimanin T by cdmD. The last step of the biosynthesis is proposed to be performed by the acetyltransferase cdmC which acetylates chrodrimanin A to yield chrodrimanin B. The pathway may also lead to the production of additional shunt products, including chrodrimanins T and U. This is Cytochrome P450 monooxygenase cdmJ from Talaromyces verruculosus (Penicillium verruculosum).